Consider the following 120-residue polypeptide: Spermidine export protein MdtJ (120 aa).

4 helical membrane-spanning segments follow: residues 1–21 (MFYWILLALAIATEITGTLSM), 31–51 (AGFILMLVMITLSYIFLSFAV), 54–74 (IALGVAYALWEGIGILFITIF), and 81–101 (EALSTMKIAGLLTLVAGIVLI).

Belongs to the drug/metabolite transporter (DMT) superfamily. Small multidrug resistance (SMR) (TC 2.A.7.1) family. MdtJ subfamily. As to quaternary structure, forms a complex with MdtI.

The protein localises to the cell inner membrane. In terms of biological role, catalyzes the excretion of spermidine. This is Spermidine export protein MdtJ from Salmonella agona (strain SL483).